The sequence spans 237 residues: Ribonuclease 3 (237 aa).

The RNase III domain maps to 4–133; that stretch reads LTELEKSLGV…VLAAIYLDKG (130 aa). A Mg(2+)-binding site is contributed by Glu-46. Residues Asp-50 and Glu-122 contribute to the active site. A Mg(2+)-binding site is contributed by Glu-122. In terms of domain architecture, DRBM spans 160-229; sequence DYKSRLQELV…AKEALQQFEN (70 aa).

Belongs to the ribonuclease III family. Homodimer. Mg(2+) is required as a cofactor.

It localises to the cytoplasm. The catalysed reaction is Endonucleolytic cleavage to 5'-phosphomonoester.. Its function is as follows. Digests double-stranded RNA. Involved in the processing of primary rRNA transcript to yield the immediate precursors to the large and small rRNAs (23S and 16S). Processes some mRNAs, and tRNAs when they are encoded in the rRNA operon. Processes pre-crRNA and tracrRNA of type II CRISPR loci if present in the organism. This is Ribonuclease 3 from Dehalococcoides mccartyi (strain ATCC BAA-2266 / KCTC 15142 / 195) (Dehalococcoides ethenogenes (strain 195)).